The following is a 236-amino-acid chain: Conserved regulator of innate immunity protein 3 (236 aa).

A mitochondrion-targeting transit peptide spans Met-1 to Leu-36.

The protein belongs to the MAM33 family.

It is found in the mitochondrion matrix. The protein is Conserved regulator of innate immunity protein 3 (cri-3) of Caenorhabditis elegans.